A 213-amino-acid polypeptide reads, in one-letter code: NADH dehydrogenase [ubiquinone] iron-sulfur protein 7, mitochondrial (213 aa).

Residues 1 to 38 constitute a mitochondrion transit peptide; the sequence is MAVLSAPGLRGFRILGLRSSVGPAVQARGVHQSVATDG. Positions 31–53 are disordered; it reads HQSVATDGPSSTQPALPKARAVA. The segment covering 33–44 has biased composition (polar residues); it reads SVATDGPSSTQP. [4Fe-4S] cluster-binding residues include Cys88 and Cys89. Position 111 is a hydroxyarginine (Arg111). [4Fe-4S] cluster is bound by residues Cys153 and Cys183.

The protein belongs to the complex I 20 kDa subunit family. As to quaternary structure, core subunit of respiratory chain NADH dehydrogenase (Complex I) which is composed of 45 different subunits. This is a component of the iron-sulfur (IP) fragment of the enzyme. It depends on [4Fe-4S] cluster as a cofactor. In terms of processing, hydroxylated at Arg-111 by NDUFAF5 early in the pathway of assembly of complex I, before the formation of the juncture between peripheral and membrane arms.

The protein resides in the mitochondrion inner membrane. The enzyme catalyses a ubiquinone + NADH + 5 H(+)(in) = a ubiquinol + NAD(+) + 4 H(+)(out). In terms of biological role, core subunit of the mitochondrial membrane respiratory chain NADH dehydrogenase (Complex I) which catalyzes electron transfer from NADH through the respiratory chain, using ubiquinone as an electron acceptor. Essential for the catalytic activity of complex I. The protein is NADH dehydrogenase [ubiquinone] iron-sulfur protein 7, mitochondrial (NDUFS7) of Homo sapiens (Human).